Consider the following 333-residue polypeptide: Transaldolase NQM1 (333 aa).

K144 serves as the catalytic Schiff-base intermediate with substrate.

Belongs to the transaldolase family. Type 1 subfamily. Homodimer.

The enzyme catalyses D-sedoheptulose 7-phosphate + D-glyceraldehyde 3-phosphate = D-erythrose 4-phosphate + beta-D-fructose 6-phosphate. The protein operates within carbohydrate degradation; pentose phosphate pathway; D-glyceraldehyde 3-phosphate and beta-D-fructose 6-phosphate from D-ribose 5-phosphate and D-xylulose 5-phosphate (non-oxidative stage): step 2/3. Transaldolase is important for the balance of metabolites in the pentose-phosphate pathway. The chain is Transaldolase NQM1 (NQM1) from Saccharomyces cerevisiae (strain ATCC 204508 / S288c) (Baker's yeast).